The sequence spans 184 residues: Oligoribonuclease (184 aa).

The 162-residue stretch at 8–169 (LIWIDLEMTG…EDIHESIIEL (162 aa)) folds into the Exonuclease domain. Y129 is a catalytic residue.

The protein belongs to the oligoribonuclease family.

It localises to the cytoplasm. Its function is as follows. 3'-to-5' exoribonuclease specific for small oligoribonucleotides. In Buchnera aphidicola subsp. Schizaphis graminum (strain Sg), this protein is Oligoribonuclease.